The primary structure comprises 151 residues: Probable chemoreceptor glutamine deamidase CheD (151 aa).

Belongs to the CheD family.

The catalysed reaction is L-glutaminyl-[protein] + H2O = L-glutamyl-[protein] + NH4(+). Probably deamidates glutamine residues to glutamate on methyl-accepting chemotaxis receptors (MCPs), playing an important role in chemotaxis. The sequence is that of Probable chemoreceptor glutamine deamidase CheD from Methanosarcina barkeri (strain Fusaro / DSM 804).